The following is a 96-amino-acid chain: Large ribosomal subunit protein uL23 (96 aa).

It belongs to the universal ribosomal protein uL23 family. In terms of assembly, part of the 50S ribosomal subunit. Contacts protein L29, and trigger factor when it is bound to the ribosome.

Functionally, one of the early assembly proteins it binds 23S rRNA. One of the proteins that surrounds the polypeptide exit tunnel on the outside of the ribosome. Forms the main docking site for trigger factor binding to the ribosome. The chain is Large ribosomal subunit protein uL23 from Nitratidesulfovibrio vulgaris (strain DSM 19637 / Miyazaki F) (Desulfovibrio vulgaris).